The chain runs to 258 residues: Snake venom serine protease 3 (258 aa).

The signal sequence occupies residues 1–18 (MVLIRVLANLLILQLSYA). Residues 19–24 (QKSSEL) constitute a propeptide that is removed on maturation. The Peptidase S1 domain occupies 25–249 (IIGGHPCNIN…YTDWIQSIIA (225 aa)). 6 disulfides stabilise this stretch: Cys-31-Cys-163, Cys-50-Cys-66, Cys-98-Cys-256, Cys-142-Cys-210, Cys-174-Cys-189, and Cys-200-Cys-225. A glycan (N-linked (GlcNAc...) asparagine) is linked at Asn-44. Residues His-65 and Asp-110 each act as charge relay system in the active site. Residue Ser-204 is the Charge relay system of the active site. Asn-239 carries N-linked (GlcNAc...) asparagine glycosylation.

This sequence belongs to the peptidase S1 family. Snake venom subfamily. Monomer. As to expression, expressed by the venom gland.

It localises to the secreted. Functionally, snake venom serine protease that may act in the hemostasis system of the prey. The chain is Snake venom serine protease 3 from Protobothrops jerdonii (Jerdon's pitviper).